The sequence spans 425 residues: AP-3 complex subunit mu (425 aa).

Residues 175-423 (TNEFFIHVLE…TIIAQNVSFR (249 aa)) enclose the MHD domain.

The protein belongs to the adaptor complexes medium subunit family.

The protein localises to the cytoplasm. Its subcellular location is the cytoskeleton. The protein resides in the microtubule organizing center. It localises to the spindle pole body. It is found in the membrane. The protein localises to the golgi apparatus. Its subcellular location is the cytoplasmic vesicle membrane. Its function is as follows. Part of the AP-3 complex, an adaptor-related complex which is not clathrin-associated. The complex is associated with the Golgi region as well as more peripheral structures. It facilitates the budding of vesicles from the Golgi membrane and may be directly involved in trafficking to the vacuole. In Schizosaccharomyces pombe (strain 972 / ATCC 24843) (Fission yeast), this protein is AP-3 complex subunit mu (apm3).